We begin with the raw amino-acid sequence, 653 residues long: Alpha-L-iduronidase (653 aa).

A signal peptide spans 1 to 27 (MRPLRPRAALLALLASLLAAPPVAPAE). 3 residues coordinate alpha-D-mannopyranose: Pro54, Leu56, and His58. Position 91 (His91) interacts with alpha-L-iduronate. N-linked (GlcNAc...) asparagine glycosylation occurs at Asn110. 2 residues coordinate alpha-L-iduronate: Asn181 and Glu182. Glu182 (proton donor) is an active-site residue. Asn190 carries N-linked (GlcNAc...) asparagine glycosylation. The alpha-L-iduronate site is built by Lys264, Glu299, and Gly305. Glu299 acts as the Nucleophile in catalysis. Residue Trp306 coordinates alpha-D-mannopyranose. Asn336 carries an N-linked (GlcNAc...) asparagine glycan. Alpha-L-iduronate is bound by residues Asp349 and Arg363. Asn372, Asn415, and Asn451 each carry an N-linked (GlcNAc...) asparagine glycan. Alpha-D-mannopyranose-binding residues include Arg488 and Arg492. Arg492 contributes to the beta-D-mannose binding site. Cys541 and Cys577 are disulfide-bonded.

It belongs to the glycosyl hydrolase 39 family. In terms of assembly, monomer. N-glycosylation at Asn-372 contributes to substrate binding and is required for full enzymatic activity. As to expression, ubiquitous.

The protein resides in the lysosome. It carries out the reaction Hydrolysis of unsulfated alpha-L-iduronosidic linkages in dermatan sulfate.. This chain is Alpha-L-iduronidase (IDUA), found in Homo sapiens (Human).